Reading from the N-terminus, the 93-residue chain is UPF0298 protein LMHCC_0506 (93 aa).

Belongs to the UPF0298 family.

It is found in the cytoplasm. The chain is UPF0298 protein LMHCC_0506 from Listeria monocytogenes serotype 4a (strain HCC23).